The chain runs to 86 residues: Small ribosomal subunit protein bS20 (86 aa).

The disordered stretch occupies residues M1–K25.

The protein belongs to the bacterial ribosomal protein bS20 family.

Binds directly to 16S ribosomal RNA. The polypeptide is Small ribosomal subunit protein bS20 (Nocardia farcinica (strain IFM 10152)).